A 488-amino-acid chain; its full sequence is DELTA-alicitoxin-Pse2b (488 aa).

Residues 1–21 form the signal peptide; that stretch reads MSKPIIFLLTAFVVLTDLGAT. The MACPF domain maps to 24–344; that stretch reads TEKVEVKAKP…GYLNFDCAYE (321 aa). The EGF-like domain maps to 369–398; sequence VCKLGPEGCHSDDDCESDDLIYCACCGDSC. Intrachain disulfides connect C370–C383, C377–C391, and C393–C398.

Its subcellular location is the secreted. It is found in the nematocyst. Causes lethal toxicity to the shrimp Palaemon paucidence, and hemolytic activity toward sheep red blood cells. This chain is DELTA-alicitoxin-Pse2b, found in Phyllodiscus semoni (Night anemone).